A 481-amino-acid chain; its full sequence is Protein hedgehog (481 aa).

The signal sequence occupies residues Met1 to Ser19. The propeptide occupies Leu20 to Ser90. Residues Ser26–His56 form a disordered region. Cys91 carries N-palmitoyl cysteine lipidation. Glu155, Glu156, Asp161, Thr191, Glu192, Asp195, and Asp197 together coordinate Ca(2+). Gly264 is lipidated: Cholesterol glycine ester.

This sequence belongs to the hedgehog family. As to quaternary structure, interacts with shf. The C-terminal part of the hedgehog protein precursor displays an autoproteolysis activity that results in the cleavage of the full-length protein into two parts (N-product and C-product). In addition, the C-terminal part displays a cholesterol transferase activity that results by the covalent attachment of a cholesterol moiety to the C-terminal of the newly generated N-product. The N-product is the active species in both local and long-range signaling, whereas the C-product has no signaling activity. Post-translationally, cholesterylation is required for N-product targeting to lipid rafts and multimerization. In terms of processing, N-palmitoylation by Rasp of the hedgehog N-product, within the secretory pathway, is required for the embryonic and larval patterning activities of the hedgehog signal.

The protein localises to the nucleus. Its subcellular location is the cytoplasm. The protein resides in the cell membrane. It carries out the reaction glycyl-L-cysteinyl-[protein] + cholesterol + H(+) = [protein]-C-terminal glycyl cholesterol ester + N-terminal L-cysteinyl-[protein]. The C-terminal part of the hedgehog protein precursor displays an autoproteolysis activity that results in the cleavage of the full-length protein into two parts (N-product and C-product). In addition, the C-terminal part displays a cholesterol transferase activity that results by the covalent attachment of a cholesterol moiety to the C-terminal of the newly generated N-product. Once cleaved, the C-product has no signaling activity and diffuses from the cell. Functionally, the dually lipidated hedgehog protein N-product is a morphogen which is essential for a variety of patterning events during development. Establishes the anterior-posterior axis of the embryonic segments and patterns the larval imaginal disks. Binds to the patched (ptc) receptor, which functions in association with smoothened (smo), to activate the transcription of target genes wingless (wg), decapentaplegic (dpp) and ptc. In the absence of hh, ptc represses the constitutive signaling activity of smo through fused (fu). Essential component of a signaling pathway which regulates the Duox-dependent gut immune response to bacterial uracil; required to activate Cad99C-dependent endosome formation, norpA-dependent Ca2+ mobilization and p38 MAPK, which are essential steps in the Duox-dependent production of reactive oxygen species (ROS) in response to intestinal bacterial infection. During photoreceptor differentiation, it up-regulates transcription of Ubr3, which in turn promotes the hh-signaling pathway by mediating the ubiquitination and degradation of cos. In Drosophila hydei (Fruit fly), this protein is Protein hedgehog.